Reading from the N-terminus, the 283-residue chain is Undecaprenyl-diphosphatase (283 aa).

Transmembrane regions (helical) follow at residues 4 to 24 (LLIL…FLPI), 45 to 65 (ADLF…YEYW), 91 to 111 (QLGL…FTLA), 118 to 138 (LFNP…IFYV), 153 to 173 (VSLK…IPGT), 194 to 214 (AEFS…LDLL), 228 to 248 (ILGV…RWLV), and 258 to 278 (IFAW…WIFG).

This sequence belongs to the UppP family.

The protein localises to the cell inner membrane. The enzyme catalyses di-trans,octa-cis-undecaprenyl diphosphate + H2O = di-trans,octa-cis-undecaprenyl phosphate + phosphate + H(+). Functionally, catalyzes the dephosphorylation of undecaprenyl diphosphate (UPP). Confers resistance to bacitracin. This chain is Undecaprenyl-diphosphatase, found in Psychrobacter sp. (strain PRwf-1).